The sequence spans 393 residues: tRNA(Met) cytidine acetate ligase (393 aa).

Positions 81, 142, and 167 each coordinate ATP.

This sequence belongs to the TmcAL family.

The protein resides in the cytoplasm. The enzyme catalyses cytidine(34) in elongator tRNA(Met) + acetate + ATP = N(4)-acetylcytidine(34) in elongator tRNA(Met) + AMP + diphosphate. Its function is as follows. Catalyzes the formation of N(4)-acetylcytidine (ac(4)C) at the wobble position of elongator tRNA(Met), using acetate and ATP as substrates. First activates an acetate ion to form acetyladenylate (Ac-AMP) and then transfers the acetyl group to tRNA to form ac(4)C34. This chain is tRNA(Met) cytidine acetate ligase, found in Bacillus cereus (strain Q1).